The sequence spans 132 residues: Large ribosomal subunit protein uL14 (132 aa).

This sequence belongs to the universal ribosomal protein uL14 family. As to quaternary structure, part of the 50S ribosomal subunit. Forms a cluster with proteins L3 and L24e, part of which may contact the 16S rRNA in 2 intersubunit bridges.

In terms of biological role, binds to 23S rRNA. Forms part of two intersubunit bridges in the 70S ribosome. The protein is Large ribosomal subunit protein uL14 of Methanobrevibacter smithii (strain ATCC 35061 / DSM 861 / OCM 144 / PS).